A 367-amino-acid chain; its full sequence is Pyrimidine monooxygenase RutA (367 aa).

FMN contacts are provided by residues 50–51, Asn116, Glu125, 141–142, and Ser191; these read IK and RY.

Belongs to the NtaA/SnaA/DszA monooxygenase family. RutA subfamily.

It carries out the reaction uracil + FMNH2 + NADH + O2 = (Z)-3-ureidoacrylate + FMN + NAD(+) + H2O + H(+). The enzyme catalyses thymine + FMNH2 + NADH + O2 = (Z)-2-methylureidoacrylate + FMN + NAD(+) + H2O + H(+). In terms of biological role, catalyzes the pyrimidine ring opening between N-3 and C-4 by an unusual flavin hydroperoxide-catalyzed mechanism, adding oxygen atoms in the process to yield ureidoacrylate peracid, that immediately reacts with FMN forming ureidoacrylate and FMN-N(5)-oxide. The FMN-N(5)-oxide reacts spontaneously with NADH to produce FMN. Requires the flavin reductase RutF to regenerate FMN in vivo. The chain is Pyrimidine monooxygenase RutA from Allorhizobium ampelinum (strain ATCC BAA-846 / DSM 112012 / S4) (Agrobacterium vitis (strain S4)).